The following is a 2391-amino-acid chain: Filaggrin-2 (2391 aa).

Positions 1–81 are S-100-like; that stretch reads MTDLLRSVVT…TEFLLMIFKL (81 aa). EF-hand domains lie at 8–43 and 49–84; these read VVTV…ELHP and DDPD…LTMA. Aspartate 62, aspartate 64, aspartate 66, arginine 68, and glutamate 73 together coordinate Ca(2+). Disordered stretches follow at residues 96–275, 349–369, and 406–2391; these read ASGS…DSGR, SYSQ…CGGQ, and NSSS…LSRH. Residues 98–107 show a composition bias toward basic residues; the sequence is GSKKHRRGHR. The span at 111–121 shows a compositional bias: acidic residues; the sequence is EESETEEDEED. The span at 149 to 163 shows a compositional bias: basic residues; it reads GTVKCRHGSNSRRLG. The segment covering 166–176 has biased composition (polar residues); it reads GNLSSSGNQEG. Residues 193-209 show a composition bias toward basic and acidic residues; the sequence is GKDRHGSSSVELRERIN. One copy of the Filaggrin 1 repeat lies at 245–289; it reads ETSGHESNSTQSRIREQKLGSSCSGSGDSGRRSHACGYSNSSGCG. Polar residues-rich tracts occupy residues 420–442 and 449–476; these read GSGS…SSGF and SGQT…SGKT. The Filaggrin 2 repeat unit spans residues 421 to 466; sequence SGSSQSTSFEQHGTGLSQSSGFEQHVCGSGQTCGQHESTSSQSLGY. Residues 480-507 show a composition bias toward gly residues; sequence GQHGSGSGQSSGFGQCGSGSGQSSGFGQ. Positions 508 to 562 are enriched in low complexity; it reads HGSVSGQSSGFGQHGSVSGQSSGFGQHESRSRQSSYGQHGSGSSQSSGYGQYGSR. Residues 568-604 are compositionally biased toward gly residues; sequence GQHGLGSGQSTGFGQYGSGSGQSSGFGQHGSGSGQSS. The span at 605 to 655 shows a compositional bias: low complexity; that stretch reads GFGQHESRSGQSSYGQHSSGSSQSSGYGQHGSRQTSGFGQHGSGSSQSTGF. Gly residues predominate over residues 656–666; the sequence is GQYGSGSGQSS. Over residues 667–734 the composition is skewed to low complexity; it reads GFGQHVSGSG…SSGQSSSFGQ (68 aa). The segment covering 735 to 756 has biased composition (gly residues); it reads HGSGSGQSSGFGQHGSGSGQSS. Residues 757 to 807 show a composition bias toward low complexity; it reads GFGQHESRSGQSSYGQHSSGSSQSSGYGQHGSRQTSGFGQHGSGSSQSTGF. Residues 808–831 are compositionally biased toward gly residues; sequence GQYGSGSGQSAGFGQHGSGSGQSS. Over residues 832-884 the composition is skewed to low complexity; that stretch reads GFGQHESRSHQSSYGQHGSGSSQSSGYGQHGSSSGQTSGFGQHRSSSGQYSGF. Gly residues predominate over residues 885 to 908; the sequence is GQHGSGSGQSSGFGQHGTGSGQYS. Residues 918 to 956 are compositionally biased toward low complexity; the sequence is HQSSYGQHGSGSSQSSGYGQHGSSSGQTFGFGQHRSGSG. Positions 957–972 are enriched in gly residues; the sequence is QSSGFGQHGSGSGQSS. 2 stretches are compositionally biased toward low complexity: residues 973–982 and 994–1027; these read GFGQHESGSG and SSQS…GFGQ. Residues 1019 to 1051 form a Filaggrin 3 repeat; it reads SGQTTGFGQHRSSSGQYSGFGQHGSGSDQSSGF. The span at 1052-1062 shows a compositional bias: gly residues; that stretch reads GQHGTGSGQSS. Positions 1063-1098 are enriched in low complexity; that stretch reads GFGQYESRSRQSSYGQHGSGSSQSSGYGQHGSNSGQ. Residues 1097 to 1141 form a Filaggrin 4 repeat; that stretch reads GQTSGFGQHRPGSGQSSGFGQYGSGSGQSSGFGQHGSGTGKSSGF. Positions 1111-1137 are enriched in gly residues; that stretch reads QSSGFGQYGSGSGQSSGFGQHGSGTGK. Positions 1148-1174 are enriched in low complexity; the sequence is SGQSSYGQHGTGSSQSSGCGQHESGSG. The span at 1175–1198 shows a compositional bias: polar residues; it reads PTTSFGQHVSGSDNFSSSGQHISD. Residues 1206 to 1220 show a composition bias toward gly residues; sequence GQYGSGSGQSTGLGQ. Positions 1226–1249 are enriched in polar residues; that stretch reads VESGSTVHGRQETTHGQTINTTRH. The segment covering 1250 to 1263 has biased composition (low complexity); that stretch reads SQSGQGQSTQTGSR. Residue serine 1276 is modified to Phosphoserine. Residues 1329–1343 show a composition bias toward polar residues; that stretch reads HGQSTQTGSRTSGRQ. The span at 1346–1355 shows a compositional bias: basic and acidic residues; sequence SHSDATDSEV. Residues 1366–1377 show a composition bias toward polar residues; the sequence is QEQTHSQAGSQH. Residues 1378–1390 show a composition bias toward basic and acidic residues; the sequence is GESESTVHERHET. Over residues 1406-1416 the composition is skewed to low complexity; that stretch reads HGQSTQRGSRT. 2 positions are modified to phosphoserine: serine 1427 and serine 1428. The segment covering 1439–1459 has biased composition (polar residues); that stretch reads RPQSQEQTHGQAGSQHGESGS. Residues 1455 to 1510 form a Filaggrin 5 repeat; it reads GESGSTVHGRHGTTHGQTGDTTRHAHYHHGKSTQRGSSTTGRRGSGHSESSDSEVH. The segment covering 1487 to 1496 has biased composition (low complexity); sequence TQRGSSTTGR. Phosphoserine is present on residues serine 1504 and serine 1505. Residues 1510–1529 are compositionally biased toward low complexity; that stretch reads HSGGSHTHSGHTHGQSGSQH. Polar residues predominate over residues 1544 to 1559; it reads HGQTGDTTRHSYSGHE. The span at 1560–1572 shows a compositional bias: low complexity; that stretch reads QTTQTGSRTTGRQ. Composition is skewed to basic and acidic residues over residues 1575-1584 and 1605-1618; these read SHSESTDSEV and QHEE…ERHG. Phosphoserine is present on serine 1579. One copy of the Filaggrin 6 repeat lies at 1607–1662; that stretch reads EEPEFTVHERHGTTHGQIGDTTGHSHSGHGQSTQRGSRTTGRQRSSHSESSDSEVH. Over residues 1627 to 1649 the composition is skewed to low complexity; it reads TTGHSHSGHGQSTQRGSRTTGRQ. The segment covering 1652–1661 has biased composition (basic and acidic residues); that stretch reads SHSESSDSEV. Phosphoserine is present on residues serine 1656 and serine 1657. 2 stretches are compositionally biased toward low complexity: residues 1662–1686 and 1711–1720; these read HSGV…QSES and GLTTQTGSRT. The segment covering 1755–1768 has biased composition (basic and acidic residues); that stretch reads QHGESESIVHERHG. Residues 1757–1812 form a Filaggrin 7 repeat; the sequence is GESESIVHERHGTIHGQTGDTTRHAHSGHGQSTQTGSRTTGRRSSGHSEYSDSEGH. The span at 1784–1795 shows a compositional bias: low complexity; it reads GHGQSTQTGSRT. Residues serine 1800 and serine 1807 each carry the phosphoserine modification. Basic and acidic residues predominate over residues 1834 to 1845; sequence GESESIVDERHG. Positions 1849–1873 are enriched in low complexity; sequence GQTGDTSGHSQSGHGQSTQSGSSTT. Residues 1879–1888 are compositionally biased toward basic and acidic residues; the sequence is GHSESSDSEV. Serine 1883, serine 1884, and serine 1959 each carry phosphoserine. Filaggrin repeat units lie at residues 1928–1964 and 1984–2039; these read DTTE…SEGP and PESG…SEGH. 2 stretches are compositionally biased toward low complexity: residues 1963 to 1982 and 2013 to 2022; these read GPSG…AGSH and GQSTQRGSRT. Position 2034 is a phosphoserine (serine 2034). 3 stretches are compositionally biased toward low complexity: residues 2039–2059, 2114–2125, and 2162–2176; these read HSGV…SQHG, HSGVSHTHSGHT, and HGQS…TGRQ. Residues 2134–2189 form a Filaggrin 10 repeat; sequence GESGSAIHGRQGTIHGQTGDTTRHGQSGHGQSTQTGSRTTGRQRSSHSESSDSEVH. Residues 2179-2190 are compositionally biased toward basic and acidic residues; sequence SHSESSDSEVHS. Composition is skewed to low complexity over residues 2201-2211, 2219-2228, and 2238-2247; these read HSQAGSRHGQS, QGTTHGQTGD, and GQSTQRGSRT. Over residues 2273 to 2288 the composition is skewed to polar residues; that stretch reads GHIQGQAGSQQRQPGS. A compositionally biased stretch (low complexity) spans 2320-2331; the sequence is SRSSRASHFQSH. Over residues 2367–2391 the composition is skewed to polar residues; that stretch reads SRKSISNSHLSWSTDSTANKQLSRH.

This sequence belongs to the S100-fused protein family. The protein in the N-terminal section; belongs to the S-100 family. Deiminated by PADI1, PADI2 or PADI3 in vitro. The deiminated form is degraded by calpain-1/CAPN1 more quickly and into shorter peptides than the intact protein. In terms of processing, may be processed by calpain-1/CAPN1 in the uppermost epidermal layers. In terms of tissue distribution, expressed in skin, thymus, stomach and placenta, but not detected in heart, brain, liver, lung, bone marrow, small intestine, spleen, prostate, colon, adrenal gland, kidney, pancreas, mammary gland, bladder, thyroid, salivary gland and trachea. Weakly expressed in esophagus, tonsils and testis (at protein level). In the skin, strongly expressed in the upper stratum granulosum and lower stratum corneum, but not detected in the upper stratum corneum (at protein level). In scalp hair follicles, mainly restricted within the granular and cornified cells surrounding the infundibular outer root sheath, with weak expression in central and proximal outer root sheath (at protein level). Tends to be down-regulated in sporiatic lesions compared to non-lesional skin inthe same patients.

The protein localises to the cytoplasm. Its subcellular location is the cytoplasmic granule. Functionally, essential for normal cell-cell adhesion in the cornified cell layers. Important for proper integrity and mechanical strength of the stratum corneum of the epidermis. In Homo sapiens (Human), this protein is Filaggrin-2 (FLG2).